Here is a 53-residue protein sequence, read N- to C-terminus: uncharacterized protein (53 aa).

It belongs to the ycf15 family.

It localises to the plastid. The protein localises to the chloroplast. This is an uncharacterized protein from Helianthus annuus (Common sunflower).